We begin with the raw amino-acid sequence, 512 residues long: Glutamate--tRNA ligase (512 aa).

The 'HIGH' region motif lies at 11–21 (PSPTGALHIGG). Positions 263–267 (KLSKR) match the 'KMSKS' region motif. Residue Lys-266 coordinates ATP.

It belongs to the class-I aminoacyl-tRNA synthetase family. Glutamate--tRNA ligase type 1 subfamily. As to quaternary structure, monomer.

It is found in the cytoplasm. The enzyme catalyses tRNA(Glu) + L-glutamate + ATP = L-glutamyl-tRNA(Glu) + AMP + diphosphate. In terms of biological role, catalyzes the attachment of glutamate to tRNA(Glu) in a two-step reaction: glutamate is first activated by ATP to form Glu-AMP and then transferred to the acceptor end of tRNA(Glu). This is Glutamate--tRNA ligase from Amoebophilus asiaticus (strain 5a2).